Reading from the N-terminus, the 631-residue chain is Quinoprotein alcohol dehydrogenase PedE (631 aa).

The signal sequence occupies residues 1-33; that stretch reads MTIRSLPALSPLALSVRVLLMAGSLALGNVATA. Residues Asp-53, Thr-56, and Asp-59 each coordinate Ca(2+). Glu-103 is a binding site for pyrroloquinoline quinone. Cys-147 and Cys-148 form a disulfide bridge. Residues Arg-153, Thr-197, and 215 to 217 contribute to the pyrroloquinoline quinone site; that span reads HGS. Glu-221 contacts Ca(2+). Residues 250–286 form a disordered region; the sequence is GRLNGKDSTPTGDVKAPSWPDDPTTETGKVEAWSHGG. Residues Asn-308 and Asp-358 each coordinate Ca(2+). Catalysis depends on Asp-358, which acts as the Proton acceptor. Arg-386 lines the pyrroloquinoline quinone pocket. A disordered region spans residues 421–443; sequence GRPVENPGQRPAKPLPGETKGKP. Positions 531 and 595 each coordinate pyrroloquinoline quinone.

It belongs to the bacterial PQQ dehydrogenase family. In terms of assembly, homodimer. Interacts with cytochrome c550. It depends on pyrroloquinoline quinone as a cofactor. The cofactor is Ca(2+). The disulfide ring formed between the two adjacent cysteine residues Cys-147 and Cys-148 is essential for efficient electron transfer at pH 7 from PedE to its natural electron acceptor cytochrome c550.

It is found in the periplasm. The enzyme catalyses a primary alcohol + 2 Fe(III)-[cytochrome c] = an aldehyde + 2 Fe(II)-[cytochrome c] + 2 H(+). It catalyses the reaction ethanol + 2 Fe(III)-[cytochrome c] = acetaldehyde + 2 Fe(II)-[cytochrome c] + 2 H(+). It carries out the reaction butan-1-ol + 2 Fe(III)-[cytochrome c] = butanal + 2 Fe(II)-[cytochrome c] + 2 H(+). The catalysed reaction is butan-2-ol + 2 Fe(III)-[cytochrome c] = butan-2-one + 2 Fe(II)-[cytochrome c] + 2 H(+). The enzyme catalyses 2-phenylethanol + 2 Fe(III)-[cytochrome c] = 2-phenylacetaldehyde + 2 Fe(II)-[cytochrome c] + 2 H(+). It catalyses the reaction octan-1-ol + 2 Fe(III)-[cytochrome c] = octanal + 2 Fe(II)-[cytochrome c] + 2 H(+). It carries out the reaction hexan-1-ol + 2 Fe(III)-[cytochrome c] = hexanal + 2 Fe(II)-[cytochrome c] + 2 H(+). The catalysed reaction is cinnamyl alcohol + 2 Fe(III)-[cytochrome c] = cinnamaldehyde + 2 Fe(II)-[cytochrome c] + 2 H(+). The enzyme catalyses farnesol + 2 Fe(III)-[cytochrome c] = farnesal + 2 Fe(II)-[cytochrome c] + 2 H(+). It catalyses the reaction an aldehyde + 2 Fe(III)-[cytochrome c] + H2O = a carboxylate + 2 Fe(II)-[cytochrome c] + 3 H(+). It carries out the reaction acetaldehyde + 2 Fe(III)-[cytochrome c] + H2O = 2 Fe(II)-[cytochrome c] + acetate + 3 H(+). The catalysed reaction is butanal + 2 Fe(III)-[cytochrome c] + H2O = butanoate + 2 Fe(II)-[cytochrome c] + 3 H(+). The enzyme catalyses hexanal + 2 Fe(III)-[cytochrome c] + H2O = hexanoate + 2 Fe(II)-[cytochrome c] + 3 H(+). It catalyses the reaction octanal + 2 Fe(III)-[cytochrome c] + H2O = octanoate + 2 Fe(II)-[cytochrome c] + 3 H(+). Its function is as follows. Alcohol dehydrogenase that catalyzes the oxidation of a range of substrates, including linear and aromatic primary and secondary alcohols, as well as aldehydes, allowing bacterial growth with a variety of volatile organic compounds (VOCs) as carbon and energy sources. Uses a specific inducible cytochrome c550, encoded by the adjacent gene in the locus, as electron acceptor. The sequence is that of Quinoprotein alcohol dehydrogenase PedE from Pseudomonas putida (strain ATCC 47054 / DSM 6125 / CFBP 8728 / NCIMB 11950 / KT2440).